The primary structure comprises 693 residues: Translation factor GUF1 homolog, chloroplastic (693 aa).

The transit peptide at 1–51 (MATDLSSSSTLLLSRNCKTPPFYHTTNSLSLSKTHHLYASRNAVVSRLRLL) directs the protein to the chloroplast. One can recognise a tr-type G domain in the interval 86–267 (SNIRNFCIIA…AIVERIPSPR (182 aa)). GTP-binding positions include 95-102 (AHIDHGKS), 160-164 (DTPGH), and 214-217 (NKID).

It belongs to the TRAFAC class translation factor GTPase superfamily. Classic translation factor GTPase family. LepA subfamily.

It localises to the plastid. Its subcellular location is the chloroplast. It carries out the reaction GTP + H2O = GDP + phosphate + H(+). Promotes chloroplast protein synthesis. May act as a fidelity factor of the translation reaction, by catalyzing a one-codon backward translocation of tRNAs on improperly translocated ribosomes. This Ricinus communis (Castor bean) protein is Translation factor GUF1 homolog, chloroplastic.